Reading from the N-terminus, the 1382-residue chain is Y' element ATP-dependent helicase protein 1 copy 4 (1382 aa).

The region spanning 383 to 560 (EIYMADTPSV…LQRIGLTGLA (178 aa)) is the Helicase ATP-binding domain. 396-403 (APPGYGKT) contributes to the ATP binding site. A Helicase C-terminal domain is found at 617-766 (KLLLALFEIE…EFYGLESKKG (150 aa)). Disordered regions lie at residues 840 to 864 (ANAS…NVRT) and 880 to 1007 (TTES…DINK). A compositionally biased stretch (low complexity) spans 880–983 (TTESTNSSTN…ATTTESTNAS (104 aa)). Positions 984–1007 (AKEDANKDGNAEDNRFHPVTDINK) are enriched in basic and acidic residues.

Belongs to the helicase family. Yeast subtelomeric Y' repeat subfamily.

In terms of biological role, catalyzes DNA unwinding and is involved in telomerase-independent telomere maintenance. This Saccharomyces cerevisiae (strain ATCC 204508 / S288c) (Baker's yeast) protein is Y' element ATP-dependent helicase protein 1 copy 4 (YRF1-4).